We begin with the raw amino-acid sequence, 492 residues long: Bifunctional purine biosynthesis protein PurH (492 aa).

One can recognise an MGS-like domain in the interval 1 to 144 (MKKAILSVSN…KNYKHVTTIV (144 aa)).

The protein belongs to the PurH family.

It carries out the reaction (6R)-10-formyltetrahydrofolate + 5-amino-1-(5-phospho-beta-D-ribosyl)imidazole-4-carboxamide = 5-formamido-1-(5-phospho-D-ribosyl)imidazole-4-carboxamide + (6S)-5,6,7,8-tetrahydrofolate. The enzyme catalyses IMP + H2O = 5-formamido-1-(5-phospho-D-ribosyl)imidazole-4-carboxamide. It participates in purine metabolism; IMP biosynthesis via de novo pathway; 5-formamido-1-(5-phospho-D-ribosyl)imidazole-4-carboxamide from 5-amino-1-(5-phospho-D-ribosyl)imidazole-4-carboxamide (10-formyl THF route): step 1/1. Its pathway is purine metabolism; IMP biosynthesis via de novo pathway; IMP from 5-formamido-1-(5-phospho-D-ribosyl)imidazole-4-carboxamide: step 1/1. This is Bifunctional purine biosynthesis protein PurH from Staphylococcus aureus (strain Newman).